The primary structure comprises 253 residues: Leucyl/phenylalanyl-tRNA--protein transferase (253 aa).

The protein belongs to the L/F-transferase family.

The protein localises to the cytoplasm. It carries out the reaction N-terminal L-lysyl-[protein] + L-leucyl-tRNA(Leu) = N-terminal L-leucyl-L-lysyl-[protein] + tRNA(Leu) + H(+). The enzyme catalyses N-terminal L-arginyl-[protein] + L-leucyl-tRNA(Leu) = N-terminal L-leucyl-L-arginyl-[protein] + tRNA(Leu) + H(+). The catalysed reaction is L-phenylalanyl-tRNA(Phe) + an N-terminal L-alpha-aminoacyl-[protein] = an N-terminal L-phenylalanyl-L-alpha-aminoacyl-[protein] + tRNA(Phe). Its function is as follows. Functions in the N-end rule pathway of protein degradation where it conjugates Leu, Phe and, less efficiently, Met from aminoacyl-tRNAs to the N-termini of proteins containing an N-terminal arginine or lysine. The protein is Leucyl/phenylalanyl-tRNA--protein transferase of Bordetella petrii (strain ATCC BAA-461 / DSM 12804 / CCUG 43448).